The following is a 169-amino-acid chain: Phosphopantetheine adenylyltransferase (169 aa).

Serine 10 is a substrate binding site. ATP-binding positions include 10–11 (SF) and histidine 18. Residues lysine 42, threonine 79, and arginine 93 each coordinate substrate. Residues 94–96 (GLR), glutamate 104, and 129–135 (VRPITAT) contribute to the ATP site.

It belongs to the bacterial CoaD family. Homohexamer. It depends on Mg(2+) as a cofactor.

It is found in the cytoplasm. The catalysed reaction is (R)-4'-phosphopantetheine + ATP + H(+) = 3'-dephospho-CoA + diphosphate. Its pathway is cofactor biosynthesis; coenzyme A biosynthesis; CoA from (R)-pantothenate: step 4/5. Its function is as follows. Reversibly transfers an adenylyl group from ATP to 4'-phosphopantetheine, yielding dephospho-CoA (dPCoA) and pyrophosphate. The chain is Phosphopantetheine adenylyltransferase from Rhodopseudomonas palustris (strain ATCC BAA-98 / CGA009).